A 198-amino-acid chain; its full sequence is Nucleoside triphosphate pyrophosphatase (198 aa).

Catalysis depends on Asp72, which acts as the Proton acceptor.

Belongs to the Maf family. The cofactor is a divalent metal cation.

It localises to the cytoplasm. The enzyme catalyses a ribonucleoside 5'-triphosphate + H2O = a ribonucleoside 5'-phosphate + diphosphate + H(+). It catalyses the reaction a 2'-deoxyribonucleoside 5'-triphosphate + H2O = a 2'-deoxyribonucleoside 5'-phosphate + diphosphate + H(+). In terms of biological role, nucleoside triphosphate pyrophosphatase. May have a dual role in cell division arrest and in preventing the incorporation of modified nucleotides into cellular nucleic acids. The chain is Nucleoside triphosphate pyrophosphatase from Corynebacterium aurimucosum (strain ATCC 700975 / DSM 44827 / CIP 107346 / CN-1) (Corynebacterium nigricans).